The sequence spans 819 residues: Eukaryotic translation initiation factor 3 subunit C (819 aa).

The interval 1–106 (MSRFFLKTYE…DSSDEEDGKK (106 aa)) is disordered. Composition is skewed to acidic residues over residues 17–41 (GEEE…ELSD) and 47–59 (DSDE…EDND). The PCI domain maps to 620–795 (FHQHINLDLI…EYIIFERGEE (176 aa)).

It belongs to the eIF-3 subunit C family. Component of the eukaryotic translation initiation factor 3 (eIF-3) complex.

It localises to the cytoplasm. Its function is as follows. Component of the eukaryotic translation initiation factor 3 (eIF-3) complex, which is involved in protein synthesis of a specialized repertoire of mRNAs and, together with other initiation factors, stimulates binding of mRNA and methionyl-tRNAi to the 40S ribosome. The eIF-3 complex specifically targets and initiates translation of a subset of mRNAs involved in cell proliferation. In Kluyveromyces lactis (strain ATCC 8585 / CBS 2359 / DSM 70799 / NBRC 1267 / NRRL Y-1140 / WM37) (Yeast), this protein is Eukaryotic translation initiation factor 3 subunit C.